The chain runs to 429 residues: Enolase (429 aa).

(2R)-2-phosphoglycerate is bound at residue Q165. Residue E207 is the Proton donor of the active site. 3 residues coordinate Mg(2+): D244, E287, and D314. Residues K339, R368, S369, and K390 each coordinate (2R)-2-phosphoglycerate. The active-site Proton acceptor is the K339.

This sequence belongs to the enolase family. Requires Mg(2+) as cofactor.

It is found in the cytoplasm. Its subcellular location is the secreted. The protein resides in the cell surface. The catalysed reaction is (2R)-2-phosphoglycerate = phosphoenolpyruvate + H2O. It functions in the pathway carbohydrate degradation; glycolysis; pyruvate from D-glyceraldehyde 3-phosphate: step 4/5. In terms of biological role, catalyzes the reversible conversion of 2-phosphoglycerate (2-PG) into phosphoenolpyruvate (PEP). It is essential for the degradation of carbohydrates via glycolysis. In Roseiflexus castenholzii (strain DSM 13941 / HLO8), this protein is Enolase.